An 86-amino-acid polypeptide reads, in one-letter code: Putative membrane protein insertion efficiency factor (86 aa).

This sequence belongs to the UPF0161 family.

Its subcellular location is the cell membrane. Functionally, could be involved in insertion of integral membrane proteins into the membrane. The sequence is that of Putative membrane protein insertion efficiency factor from Streptococcus pyogenes serotype M1.